A 478-amino-acid polypeptide reads, in one-letter code: Proline--tRNA ligase (478 aa).

Belongs to the class-II aminoacyl-tRNA synthetase family. ProS type 3 subfamily. In terms of assembly, homodimer.

It is found in the cytoplasm. It catalyses the reaction tRNA(Pro) + L-proline + ATP = L-prolyl-tRNA(Pro) + AMP + diphosphate. Catalyzes the attachment of proline to tRNA(Pro) in a two-step reaction: proline is first activated by ATP to form Pro-AMP and then transferred to the acceptor end of tRNA(Pro). The chain is Proline--tRNA ligase from Clostridium botulinum (strain Okra / Type B1).